Here is a 37-residue protein sequence, read N- to C-terminus: DANSFCQLPAVVGRCRGRFPRYYYNTEAGKCQRFIYG.

Residues cysteine 6 to glycine 37 form the BPTI/Kunitz inhibitor domain.

Belongs to the venom Kunitz-type family. Sea anemone type 2 potassium channel toxin subfamily.

It is found in the secreted. Its subcellular location is the nematocyst. Dual-function toxin that inhibits both the serine protease trypsin and voltage-gated potassium channels (Kv). In Actinia equina (Beadlet anemone), this protein is Kunitz-type proteinase inhibitor AEPI-IV.